The sequence spans 1323 residues: PH domain leucine-rich repeat-containing protein phosphatase 2 (1323 aa).

The PH domain maps to 150 to 248; the sequence is RILLSGIYNV…WQRQASKVVS (99 aa). LRR repeat units lie at residues 250–271, 273–296, 300–321, 323–344, 346–368, 369–390, 392–412, 416–439, 440–460, 461–480, 481–502, 503–524, 526–547, 549–570, 571–592, 595–616, 621–644, 645–666, 669–690, 692–713, 714–735, and 737–758; these read RIST…LFYS, DITY…DTLY, QLKG…LCEI, TLTE…IGNL, NLQT…GNLQ, QLSS…YEKL, MLDR…GVLN, HIKH…EGNK, HITH…SSLC, SLEQ…LSGF, SLRT…PVPS, LLTF…ACEA, KIEV…ILSS, SLRK…VEHI, PLEV…LFSK, NLRY…CTGE, MLQL…VGHL, HLRI…KLNK, QLEE…IANC, RLHT…LQLP, QIQF…EALP, and TLQD…TLDI. The region spanning 785–1033 is the PPM-type phosphatase domain; that stretch reads SHGLAEMAGQ…DNVGAMVVYL (249 aa). Mn(2+) contacts are provided by Asp820, Gly821, Lys985, and Asp1024. Positions 1060-1157 are disordered; sequence TIKDAPKPAT…DSDDDQPVEG (98 aa). Residues 1071–1097 show a composition bias toward low complexity; sequence SSSSGIASEFSSEMSTSEVSSEVGSTA. The span at 1122-1146 shows a compositional bias: polar residues; it reads PTPTSGLFQRQPSSATFSSNQSDNG. The residue at position 1210 (Ser1210) is a Phosphoserine. Positions 1285–1323 are disordered; that stretch reads HDLEEEVKEQMKQHQDSRLEPEPHEEDRTEPPEEFDTAL. Basic and acidic residues predominate over residues 1292 to 1315; it reads KEQMKQHQDSRLEPEPHEEDRTEP.

As to quaternary structure, interacts with AKT1, AKT3 and PRKCB isoform beta-II. Interacts with STK4, RPS6KB1, RAF1. Interacts with FKBP5; FKBP5 acts as a scaffold for PHLPP2 and Akt. Interacts with NHERF1; NHERF1 scaffolds a heterotrimeric complex with PTEN. It depends on Mn(2+) as a cofactor. In colorectal cancer tissue, expression is highest in the surface epithelium of normal colonic mucosa adjacent to the cancer tissue but is largely excluded from the crypt bases. Expression is lost or significantly decreased in 80% of tested tumors (at protein level).

The protein localises to the cytoplasm. Its subcellular location is the membrane. It is found in the nucleus. The catalysed reaction is O-phospho-L-seryl-[protein] + H2O = L-seryl-[protein] + phosphate. The enzyme catalyses O-phospho-L-threonyl-[protein] + H2O = L-threonyl-[protein] + phosphate. Its activity is regulated as follows. Inhibited by AKT1, AKT2 and AKT3. Activated by oleic acid and arachidonic acid. In terms of biological role, protein phosphatase involved in regulation of Akt and PKC signaling. Mediates dephosphorylation in the C-terminal domain hydrophobic motif of members of the AGC Ser/Thr protein kinase family; specifically acts on 'Ser-473' of AKT1, 'Ser-660' of PRKCB isoform beta-II and 'Ser-657' of PRKCA. Akt regulates the balance between cell survival and apoptosis through a cascade that primarily alters the function of transcription factors that regulate pro- and antiapoptotic genes. Dephosphorylation of 'Ser-473' of Akt triggers apoptosis and decreases cell proliferation. Also controls the phosphorylation of AKT3. Dephosphorylates STK4 on 'Thr-387' leading to STK4 activation and apoptosis. Dephosphorylates RPS6KB1 and is involved in regulation of cap-dependent translation. Inhibits cancer cell proliferation and may act as a tumor suppressor. Dephosphorylation of PRKCA and PRKCB leads to their destabilization and degradation. Dephosphorylates RAF1 inhibiting its kinase activity. This chain is PH domain leucine-rich repeat-containing protein phosphatase 2 (PHLPP2), found in Homo sapiens (Human).